The sequence spans 265 residues: Selenoprotein Pb (265 aa).

Positions 1–18 (MQALWPLLLSALPALLGA) are cleaved as a signal peptide. Asn28 carries an N-linked (GlcNAc...) asparagine glycan. Sec64 is a non-standard amino acid (selenocysteine). Residues Asn88, Asn178, Asn184, and Asn207 are each glycosylated (N-linked (GlcNAc...) asparagine). The tract at residues 188-265 (SESSDSTKND…SHQEHVHNHR (78 aa)) is disordered. The segment covering 201–211 (ENNQRPNSTEP) has biased composition (polar residues). The segment covering 215 to 231 (AHHHHHQQHEPHHHHHN) has biased composition (basic residues). Basic and acidic residues predominate over residues 239 to 265 (KSGDSDVTGKPKEPPHHSHQEHVHNHR).

The protein localises to the secreted. Might be responsible for some of the extracellular antioxidant defense properties of selenium. The sequence is that of Selenoprotein Pb (sepp1b) from Danio rerio (Zebrafish).